Reading from the N-terminus, the 267-residue chain is MHDSGGVQMARALKHAALCLMLLPRFLLAAVMLWLLDFLCIRKKVLLKMGERQDGPDDPPVCVSDSNKMFTLESLRAVWYGQKLDFLKSAHLGRTAPNTEVMLVQERRQVRILDCMKGKRPLILNFGSCSUPPFMTRLAAFQRVVSQYADIADFLVVYIEEAHPSDGWVSSDAPYQIPKHRCLEDRLRAAQLMLAEVPGSNVVVDNMDNSSNAAYGAYFERLYIVRDERVVYQGGRGPEGYRISELRNWLEQYRNGLVNSQTAVLHV.

The Cytoplasmic segment spans residues 1-15; that stretch reads MHDSGGVQMARALKH. The chain crosses the membrane as a helical; Signal-anchor for type II membrane protein span at residues 16–36; it reads AALCLMLLPRFLLAAVMLWLL. Over 37-267 the chain is Extracellular; sequence DFLCIRKKVL…VNSQTAVLHV (231 aa). Sec-131 is an active-site residue. Residue Sec-131 is a non-standard amino acid, selenocysteine.

It belongs to the iodothyronine deiodinase family. In terms of assembly, monomer. Homodimer. May undergo minor heretodimerization with DIO1 and DIO2.

The protein localises to the cell membrane. It is found in the endosome membrane. It carries out the reaction 3,3',5'-triiodo-L-thyronine + iodide + A + H(+) = L-thyroxine + AH2. The catalysed reaction is 3,3'-diiodo-L-thyronine + iodide + A + H(+) = 3,3',5-triiodo-L-thyronine + AH2. It catalyses the reaction 3-iodo-L-thyronine + iodide + A + H(+) = 3,5-diiodo-L-thyronine + AH2. The enzyme catalyses L-thyronine + iodide + A + H(+) = 3-iodo-L-thyronine + AH2. It carries out the reaction 3',5'-diiodo-L-thyronine + iodide + A + H(+) = 3,3',5'-triiodo-L-thyronine + AH2. The catalysed reaction is 3'-iodo-L-thyronine + iodide + A + H(+) = 3,3'-diiodo-L-thyronine + AH2. It catalyses the reaction 3,3',5'-triiodothyronamine + iodide + A + H(+) = 3,3',5,5'-tetraiodothyronamine + AH2. The enzyme catalyses 3',5'-diiodothyronamine + iodide + A + H(+) = 3,3',5'-triiodothyronamine + AH2. It carries out the reaction 3,3'-diiodothyronamine + iodide + A + H(+) = 3,3',5-triiodothyronamine + AH2. The catalysed reaction is 3-iodothyronamine + iodide + A + H(+) = 3,5-diiodothyronamine + AH2. It catalyses the reaction 3'-iodothyronamine + iodide + A + H(+) = 3,3'-diiodothyronamine + AH2. The enzyme catalyses thyronamine + iodide + A + H(+) = 3-iodothyronamine + AH2. Plays a crucial role in the metabolism of thyroid hormones (TH) and has specific roles in TH activation and inactivation by deiodination. Catalyzes the deiodination of L-thyroxine (T4) to 3,3',5'-triiodothyronine (rT3), 3,5,3'-triiodothyronine (T3) to 3,3'-diiodothyronine (3,3'-T2), 3,5-diiodothyronine (3,5-T2) to 3-monoiodothyronine (3-T1), rT3 to 3',5'-diiodothyronine (3',5'-T2) and 3,3'-T2 to 3'-monoiodothyronine (3'-T1) via inner-ring deiodination (IRD). Catalyzes the deiodination of 3-T1 to L-thyronine (T0) via outer-ring deiodination (ORD). Catalyzes the tyrosyl ring deiodinations of 3,3',5,5'-tetraiodothyronamine, 3,3',5'-triiodothyronamine, 3,5,3'-triiodothyronamine, 3,5-diiodothyronamine, 3,3'-diiodothyronamine and 3-iodothyronamine. This is Thyroxine 5-deiodinase (dio3) from Sparus aurata (Gilthead sea bream).